The primary structure comprises 480 residues: Aromatic-L-amino-acid decarboxylase (480 aa).

Position 292 is an N6-(pyridoxal phosphate)lysine (Lys292).

This sequence belongs to the group II decarboxylase family. Pyridoxal 5'-phosphate serves as cofactor.

It catalyses the reaction L-tryptophan + H(+) = tryptamine + CO2. The catalysed reaction is L-phenylalanine + H(+) = 2-phenylethylamine + CO2. It carries out the reaction 5-hydroxy-L-tryptophan + H(+) = serotonin + CO2. The enzyme catalyses L-dopa + H(+) = dopamine + CO2. Its function is as follows. Involved in bacillamide C biosynthesis. Catalyzes the decarboxylation of L-tryptophan to tryptamine. The tryptamine obtained is then probably incorporated into the bacillamide C peptide, which is derived from the amino acids alanine, cysteine and tryptophan through nonribosomal peptide synthetase (NRPS) biosynthesis strategy. L-tryptophan is the best substrate, but the enzyme displays broad substrate specificity for various aromatic amino acids in vitro and it can also catalyze the decarboxylation of L-phenylalanine, 5-hydroxy-L-tryptophan (L-HTP) and L-DOPA, with lower efficiency. Exhibits weak activity with L-tyrosine. The protein is Aromatic-L-amino-acid decarboxylase of Bacillus atrophaeus.